The primary structure comprises 319 residues: Cell division protein PomZ (319 aa).

61-68 (KGGTGKTS) contacts ATP.

It belongs to the ParA family. Interacts with FtsZ in pull-down experiments.

The protein localises to the cytoplasm. Its function is as follows. Spatial regulator of cell division that is involved in identifying the incipient division site, recruiting FtsZ to the division site and stabilizing the Z-ring. Binds ATP and GTP. The polypeptide is Cell division protein PomZ (Myxococcus xanthus (strain DK1622)).